The primary structure comprises 1325 residues: ATP-binding cassette sub-family C member 4 (1325 aa).

Helical transmembrane passes span 93–113 (LILG…PLFL), 136–156 (GYAA…HLYF), 205–225 (FDQV…AIAV), 227–247 (VLLW…LVIL), 322–342 (ASFF…YVLL), and 351–371 (VFVA…FFPS). The ABC transmembrane type-1 1 domain occupies 93 to 377 (LILGIFTLIE…FFPSAIERGS (285 aa)). One can recognise an ABC transporter 1 domain in the interval 410–633 (VHVQDFTAFW…GVDFGSLLKK (224 aa)). Residue 445-452 (GPVGAGKS) participates in ATP binding. A phosphothreonine mark is found at Thr-646 and Thr-648. The segment covering 657–667 (ASIWSQQSSRP) has biased composition (polar residues). The segment at 657-690 (ASIWSQQSSRPSLKDGAPEGQDAENTQAVQPEES) is disordered. A phosphoserine mark is found at Ser-664 and Ser-668. The next 5 helical transmembrane spans lie at 710–730 (SWFF…FYVL), 761–781 (LSWY…FGIA), 849–869 (LVVS…IPLV), 954–974 (AICA…AKTL), and 977–997 (GQVG…QWSV). The ABC transmembrane type-1 2 domain maps to 714 to 1005 (IIFLVLLNMV…SVRQSAEVEN (292 aa)). An ABC transporter 2 domain is found at 1041–1274 (IVFDNVNFTY…PESLFYKMVQ (234 aa)). Residue 1075–1082 (GRTGAGKS) coordinates ATP. A PDZ-binding motif is present at residues 1322-1325 (ETAL).

In terms of assembly, interacts (via PDZ-binding motif) with SNX27 (via PDZ domain); this interaction accelerates MRP4 internalization. Requires Mg(2+) as cofactor. In terms of processing, N-glycosylated; leading to substrate-selective effects on its transport activity.

The protein localises to the basolateral cell membrane. It is found in the apical cell membrane. The enzyme catalyses ATP + H2O + xenobioticSide 1 = ADP + phosphate + xenobioticSide 2.. The catalysed reaction is an S-substituted glutathione(in) + ATP + H2O = an S-substituted glutathione(out) + ADP + phosphate + H(+). It catalyses the reaction 17beta-estradiol 17-O-(beta-D-glucuronate)(in) + ATP + H2O = 17beta-estradiol 17-O-(beta-D-glucuronate)(out) + ADP + phosphate + H(+). It carries out the reaction dehydroepiandrosterone 3-sulfate(in) + ATP + H2O = dehydroepiandrosterone 3-sulfate(out) + ADP + phosphate + H(+). The enzyme catalyses leukotriene C4(in) + ATP + H2O = leukotriene C4(out) + ADP + phosphate + H(+). The catalysed reaction is leukotriene B4(in) + ATP + H2O = leukotriene B4(out) + ADP + phosphate + H(+). It catalyses the reaction urate(in) + ATP + H2O = urate(out) + ADP + phosphate + H(+). It carries out the reaction 3',5'-cyclic GMP(in) + ATP + H2O = 3',5'-cyclic GMP(out) + ADP + phosphate + H(+). The enzyme catalyses 3',5'-cyclic AMP(in) + ATP + H2O = 3',5'-cyclic AMP(out) + ADP + phosphate + H(+). The catalysed reaction is prostaglandin E2(in) + ATP + H2O = prostaglandin E2(out) + ADP + phosphate + H(+). It catalyses the reaction prostaglandin E1(in) + ATP + H2O = prostaglandin E1(out) + ADP + phosphate + H(+). It carries out the reaction glycodeoxycholate(in) + glutathione(in) + ATP + H2O = glycodeoxycholate(out) + glutathione(out) + ADP + phosphate + H(+). The enzyme catalyses cholate(in) + glutathione(in) + ATP + H2O = cholate(out) + glutathione(out) + ADP + phosphate + H(+). The catalysed reaction is glycocholate(in) + glutathione(in) + ATP + H2O = glycocholate(out) + glutathione(out) + ADP + phosphate + H(+). It catalyses the reaction taurocholate(in) + glutathione(in) + ATP + H2O = taurocholate(out) + glutathione(out) + ADP + phosphate + H(+). It carries out the reaction glycochenodeoxycholate(in) + glutathione(in) + ATP + H2O = glycochenodeoxycholate(out) + glutathione(out) + ADP + phosphate + H(+). The enzyme catalyses taurochenodeoxycholate(in) + glutathione(in) + ATP + H2O = taurochenodeoxycholate(out) + glutathione(out) + ADP + phosphate + H(+). The catalysed reaction is glycoursodeoxycholate(in) + glutathione(in) + ATP + H2O = glycoursodeoxycholate(out) + glutathione(out) + ADP + phosphate + H(+). It catalyses the reaction tauroursodeoxycholate(in) + glutathione(in) + ATP + H2O = tauroursodeoxycholate(out) + glutathione(out) + ADP + phosphate + H(+). Functionally, ATP-dependent transporter of the ATP-binding cassette (ABC) family that actively extrudes physiological compounds and xenobiotics from cells. Transports a range of endogenous molecules that have a key role in cellular communication and signaling, including cyclic nucleotides such as cyclic AMP (cAMP) and cyclic GMP (cGMP), bile acids, steroid conjugates, urate, and prostaglandins. Also mediates the ATP-dependent efflux of glutathione conjugates such as leukotriene C4 (LTC4) and leukotriene B4 (LTB4). The presence of GSH is necessary for the ATP-dependent transport of LTB4, whereas GSH is not required for the transport of LTC4. Mediates the cotransport of bile acids with reduced glutathione (GSH). Transports a wide range of drugs and their metabolites, including anticancer, antiviral and antibiotics molecules. Confers resistance to anticancer agents. In Mus musculus (Mouse), this protein is ATP-binding cassette sub-family C member 4.